A 400-amino-acid polypeptide reads, in one-letter code: Tryptophan synthase beta chain (400 aa).

K91 bears the N6-(pyridoxal phosphate)lysine mark.

The protein belongs to the TrpB family. Tetramer of two alpha and two beta chains. Requires pyridoxal 5'-phosphate as cofactor.

The enzyme catalyses (1S,2R)-1-C-(indol-3-yl)glycerol 3-phosphate + L-serine = D-glyceraldehyde 3-phosphate + L-tryptophan + H2O. It participates in amino-acid biosynthesis; L-tryptophan biosynthesis; L-tryptophan from chorismate: step 5/5. The beta subunit is responsible for the synthesis of L-tryptophan from indole and L-serine. The sequence is that of Tryptophan synthase beta chain from Listeria monocytogenes serotype 4a (strain HCC23).